We begin with the raw amino-acid sequence, 832 residues long: Translation initiation factor IF-2 (832 aa).

A compositionally biased stretch (basic and acidic residues) spans 1-10 (MLMSDVEKFG). 3 disordered regions span residues 1 to 87 (MLMS…SRSA), 120 to 148 (RDEE…PAAA), and 163 to 201 (IAPG…GGGG). Residues 11 to 20 (GDCGSSGGSG) show a composition bias toward gly residues. Polar residues-rich tracts occupy residues 29-42 (RAST…STGG) and 71-87 (SPYT…SRSA). The region spanning 331-500 (PRPPVVTVMG…LLLAEMLELR (170 aa)) is the tr-type G domain. The interval 340 to 347 (GHVDHGKT) is G1. 340 to 347 (GHVDHGKT) is a GTP binding site. Positions 365 to 369 (GITQH) are G2. The G3 stretch occupies residues 386–389 (DTPG). GTP is bound by residues 386 to 390 (DTPGH) and 440 to 443 (NKID). Residues 440-443 (NKID) form a G4 region. Residues 476–478 (SAK) are G5.

Belongs to the TRAFAC class translation factor GTPase superfamily. Classic translation factor GTPase family. IF-2 subfamily.

The protein resides in the cytoplasm. In terms of biological role, one of the essential components for the initiation of protein synthesis. Protects formylmethionyl-tRNA from spontaneous hydrolysis and promotes its binding to the 30S ribosomal subunits. Also involved in the hydrolysis of GTP during the formation of the 70S ribosomal complex. This Anaplasma marginale (strain St. Maries) protein is Translation initiation factor IF-2.